The primary structure comprises 66 residues: DNA gyrase inhibitor YacG (66 aa).

The Zn(2+) site is built by Cys-9, Cys-12, Cys-28, and Cys-32.

This sequence belongs to the DNA gyrase inhibitor YacG family. In terms of assembly, interacts with GyrB. The cofactor is Zn(2+).

Inhibits all the catalytic activities of DNA gyrase by preventing its interaction with DNA. Acts by binding directly to the C-terminal domain of GyrB, which probably disrupts DNA binding by the gyrase. The polypeptide is DNA gyrase inhibitor YacG (Pseudomonas aeruginosa (strain LESB58)).